An 839-amino-acid polypeptide reads, in one-letter code: Pre-mRNA-splicing factor syf1 (839 aa).

HAT repeat units follow at residues 12–44 (YLIADQDTVYEQDLFRAPGSIKPWLAYIEYKQQ), 46–78 (GTLYEQAFVMERACKQLPRSYKLWKMYLEFRIN), 90–122 (AEYQKVNALFERALILLNKMPKIWEMYLSFLLQ), 124–158 (PLVTQTRRTFDRALRALPITQHNRIWKLYKAFARS), 274–309 (GNFEKARDVFEEGITTVMTVRDFTLIFDAYVEFEES), 377–415 (DNKEEIVNTYTAAIAAINPKKAHGKFSELWVNYAKFYES), 417–453 (GDLDTARVIFDKAVKVPFKSVAELADTWCEWAEMELR), 470–502 (APKKSTVDYFDETLSPQQRVHKSWKLWSFYVDL), 507–539 (ATLEETRKVYERIFELRIATPQTVVNYANLLEE), 541–575 (KYFEDSFKVYERGLDLFSYPVAFELWNLYLTKAVD), 578–612 (IGIERLRDLFEQALDGCPPKFAKPLYLMYGNLEEE), 650–684 (FGLTSTRPIYERAIAALPDQEAKEMCLKFADMERR), and 686–720 (GEIDRARAIYGHASQFCDPRTNAGFWQKWEAFEVQ). Residues 758–839 (QRAQEGARER…IDLDDDMDAE (82 aa)) are disordered. Basic and acidic residues predominate over residues 762-782 (EGAREREGEEAGTDASKERAD). Residues 830–839 (IDLDDDMDAE) are compositionally biased toward acidic residues.

It belongs to the crooked-neck family. Associated with the spliceosome.

Its subcellular location is the nucleus. Functionally, involved in pre-mRNA splicing and cell cycle progression. This is Pre-mRNA-splicing factor syf1 (syf1) from Aspergillus fumigatus (strain ATCC MYA-4609 / CBS 101355 / FGSC A1100 / Af293) (Neosartorya fumigata).